The chain runs to 265 residues: 3-methyl-2-oxobutanoate hydroxymethyltransferase (265 aa).

Mg(2+) is bound by residues aspartate 44 and aspartate 83. Residues 44 to 45 (DS), aspartate 83, and lysine 113 each bind 3-methyl-2-oxobutanoate. Residue glutamate 115 participates in Mg(2+) binding. Glutamate 182 acts as the Proton acceptor in catalysis.

The protein belongs to the PanB family. As to quaternary structure, homodecamer; pentamer of dimers. Mg(2+) is required as a cofactor.

The protein resides in the cytoplasm. The enzyme catalyses 3-methyl-2-oxobutanoate + (6R)-5,10-methylene-5,6,7,8-tetrahydrofolate + H2O = 2-dehydropantoate + (6S)-5,6,7,8-tetrahydrofolate. It functions in the pathway cofactor biosynthesis; (R)-pantothenate biosynthesis; (R)-pantoate from 3-methyl-2-oxobutanoate: step 1/2. Its function is as follows. Catalyzes the reversible reaction in which hydroxymethyl group from 5,10-methylenetetrahydrofolate is transferred onto alpha-ketoisovalerate to form ketopantoate. The sequence is that of 3-methyl-2-oxobutanoate hydroxymethyltransferase from Aquifex aeolicus (strain VF5).